The sequence spans 239 residues: Ribosomal RNA small subunit methyltransferase G (239 aa).

S-adenosyl-L-methionine contacts are provided by residues G77, F82, 128-129 (AE), and R147.

This sequence belongs to the methyltransferase superfamily. RNA methyltransferase RsmG family.

It is found in the cytoplasm. Specifically methylates the N7 position of guanine in position 535 of 16S rRNA. The protein is Ribosomal RNA small subunit methyltransferase G of Bacillus mycoides (strain KBAB4) (Bacillus weihenstephanensis).